The primary structure comprises 398 residues: Bifunctional enzyme IspD/IspF (398 aa).

Positions 1-234 (MSNSKRTAAI…SRLGALLGDI (234 aa)) are 2-C-methyl-D-erythritol 4-phosphate cytidylyltransferase. A 2-C-methyl-D-erythritol 2,4-cyclodiphosphate synthase region spans residues 235-398 (RTGTGYDVHA…LPWGTNGLAD (164 aa)). Residues aspartate 241 and histidine 243 each contribute to the a divalent metal cation site. 4-CDP-2-C-methyl-D-erythritol 2-phosphate contacts are provided by residues 241-243 (DVH) and 267-268 (HS). Histidine 275 contacts a divalent metal cation. 4-CDP-2-C-methyl-D-erythritol 2-phosphate-binding positions include 289 to 291 (DIG), 365 to 368 (TTSE), phenylalanine 372, and arginine 375.

The protein in the N-terminal section; belongs to the IspD/TarI cytidylyltransferase family. IspD subfamily. This sequence in the C-terminal section; belongs to the IspF family. A divalent metal cation is required as a cofactor.

It catalyses the reaction 2-C-methyl-D-erythritol 4-phosphate + CTP + H(+) = 4-CDP-2-C-methyl-D-erythritol + diphosphate. It carries out the reaction 4-CDP-2-C-methyl-D-erythritol 2-phosphate = 2-C-methyl-D-erythritol 2,4-cyclic diphosphate + CMP. It functions in the pathway isoprenoid biosynthesis; isopentenyl diphosphate biosynthesis via DXP pathway; isopentenyl diphosphate from 1-deoxy-D-xylulose 5-phosphate: step 2/6. Its pathway is isoprenoid biosynthesis; isopentenyl diphosphate biosynthesis via DXP pathway; isopentenyl diphosphate from 1-deoxy-D-xylulose 5-phosphate: step 4/6. Its function is as follows. Bifunctional enzyme that catalyzes the formation of 4-diphosphocytidyl-2-C-methyl-D-erythritol from CTP and 2-C-methyl-D-erythritol 4-phosphate (MEP) (IspD), and catalyzes the conversion of 4-diphosphocytidyl-2-C-methyl-D-erythritol 2-phosphate (CDP-ME2P) to 2-C-methyl-D-erythritol 2,4-cyclodiphosphate (ME-CPP) with a corresponding release of cytidine 5-monophosphate (CMP) (IspF). This Rhodopseudomonas palustris (strain BisB18) protein is Bifunctional enzyme IspD/IspF.